A 272-amino-acid polypeptide reads, in one-letter code: MPELPEVEVTRRGIEPFVAGRRVERVDVRTAMLRWPVPAGFAEMLRSREVLRVERRGKYLLFEVDAGWFIVHLGMTGTLRVLPNDAPPPAPAKHDHVDWIFDEFVLRFRDPRRFGAVLWHPRDAGDVHAHPLLASLGVEPFSAALLFGRTRGRTVSVKQALLAGDIVVGVGNIYASESLFRAGIRPTTAAGRVSLPRYERLADAVRATLADAIERGGSTLRDFVGSNGESGYFQLDCFVYDRAGEPCRVCGAPIRQIVQGQRSTYFCPNCQR.

P2 serves as the catalytic Schiff-base intermediate with DNA. E3 serves as the catalytic Proton donor. The active-site Proton donor; for beta-elimination activity is the K58. H94, R112, and R153 together coordinate DNA. Residues 238–272 (FVYDRAGEPCRVCGAPIRQIVQGQRSTYFCPNCQR) form an FPG-type zinc finger. R262 serves as the catalytic Proton donor; for delta-elimination activity.

The protein belongs to the FPG family. In terms of assembly, monomer. Zn(2+) serves as cofactor.

The catalysed reaction is Hydrolysis of DNA containing ring-opened 7-methylguanine residues, releasing 2,6-diamino-4-hydroxy-5-(N-methyl)formamidopyrimidine.. The enzyme catalyses 2'-deoxyribonucleotide-(2'-deoxyribose 5'-phosphate)-2'-deoxyribonucleotide-DNA = a 3'-end 2'-deoxyribonucleotide-(2,3-dehydro-2,3-deoxyribose 5'-phosphate)-DNA + a 5'-end 5'-phospho-2'-deoxyribonucleoside-DNA + H(+). Functionally, involved in base excision repair of DNA damaged by oxidation or by mutagenic agents. Acts as a DNA glycosylase that recognizes and removes damaged bases. Has a preference for oxidized purines, such as 7,8-dihydro-8-oxoguanine (8-oxoG). Has AP (apurinic/apyrimidinic) lyase activity and introduces nicks in the DNA strand. Cleaves the DNA backbone by beta-delta elimination to generate a single-strand break at the site of the removed base with both 3'- and 5'-phosphates. The protein is Formamidopyrimidine-DNA glycosylase of Burkholderia mallei (strain NCTC 10229).